Consider the following 229-residue polypeptide: MDYLEWRHVFRLDPAKDISDEDLEKICESGTDVILVGGTDNVTLDGVLDLLVRVRRFEVPIALEISTIDAITPGYDYYFIPTVLNSDDPKWIKNLHHAAIKEFGDIMVWDELVAEGYCILNPDCKVAHVTGATTDLSIDDIVAYARMAENFFKLPVFYLEYSGIYGNPEVVSAVKNELKHTKLFYGGGITSAKQAEEMAQYADTVVVGNIIYEDLKAALATVKAVKNTL.

2 residues coordinate Mg(2+): Asp13 and Thr39.

The protein belongs to the GGGP/HepGP synthase family. In terms of assembly, homodimer. Requires Mg(2+) as cofactor.

It carries out the reaction sn-glycerol 1-phosphate + all-trans-heptaprenyl diphosphate = 3-heptaprenyl-sn-glycero-1-phosphate + diphosphate. Its pathway is membrane lipid metabolism; glycerophospholipid metabolism. Functionally, prenyltransferase that catalyzes in vivo the transfer of the heptaprenyl moiety of heptaprenyl pyrophosphate (HepPP; 35 carbon atoms) to the C3 hydroxyl of sn-glycerol-1-phosphate (G1P), producing heptaprenylglyceryl phosphate (HepGP). This reaction is an ether-bond-formation step in the biosynthesis of archaea-type G1P-based membrane lipids found in Bacillales. This chain is Heptaprenylglyceryl phosphate synthase, found in Lysinibacillus sphaericus (strain C3-41).